A 395-amino-acid chain; its full sequence is Subtilisin-like protease 9 (395 aa).

An N-terminal signal peptide occupies residues 1 to 20; that stretch reads MGFFRTLFSFSIFALSLADT. A propeptide spanning residues 21-120 is cleaved from the precursor; the sequence is SKFIGLDDVD…ADRVVKMAAL (100 aa). Positions 36–117 constitute an Inhibitor I9 domain; that stretch reads SYIVVMKGAV…YVEADRVVKM (82 aa). Residues 128–395 enclose the Peptidase S8 domain; it reads SWGLGRISHK…RRLLYNGSGA (268 aa). Catalysis depends on charge relay system residues D160 and H191. The N-linked (GlcNAc...) asparagine glycan is linked to N252. S341 acts as the Charge relay system in catalysis. An N-linked (GlcNAc...) asparagine glycan is attached at N391.

Belongs to the peptidase S8 family.

The protein localises to the secreted. In terms of biological role, secreted subtilisin-like serine protease with keratinolytic activity that contributes to pathogenicity. The sequence is that of Subtilisin-like protease 9 (SUB9) from Arthroderma otae (strain ATCC MYA-4605 / CBS 113480) (Microsporum canis).